The primary structure comprises 811 residues: LPS-assembly protein LptD (811 aa).

The N-terminal stretch at 1–17 (MTEPNRARKTRQRTAFA) is a signal peptide. The disordered stretch occupies residues 1–22 (MTEPNRARKTRQRTAFAAPDQR).

Belongs to the LptD family. As to quaternary structure, component of the lipopolysaccharide transport and assembly complex. Interacts with LptE and LptA.

It is found in the cell outer membrane. Its function is as follows. Together with LptE, is involved in the assembly of lipopolysaccharide (LPS) at the surface of the outer membrane. This Ralstonia nicotianae (strain ATCC BAA-1114 / GMI1000) (Ralstonia solanacearum) protein is LPS-assembly protein LptD.